We begin with the raw amino-acid sequence, 425 residues long: Interferon regulatory factor 8 (425 aa).

The IRF tryptophan pentad repeat DNA-binding region spans 7-114 (GRRLRQWLIE…EPYKVYRIVP (108 aa)).

The protein belongs to the IRF family.

The protein localises to the nucleus. It localises to the cytoplasm. Plays a role as a transcriptional activator or repressor. Specifically binds to the upstream regulatory region of type I IFN and IFN-inducible MHC class I genes (the interferon consensus sequence (ICS)). Plays a regulatory role in cells of the immune system. The chain is Interferon regulatory factor 8 (IRF8) from Gallus gallus (Chicken).